The following is a 1044-amino-acid chain: Translation initiation factor IF-2 (1044 aa).

Residues Glu-55–Arg-458 are disordered. Positions Gln-57–Lys-77 are enriched in low complexity. Residues Leu-104–Ala-146 are compositionally biased toward basic and acidic residues. Low complexity-rich tracts occupy residues Glu-147 to Val-168, Lys-190 to Ala-231, and Ala-254 to Ala-265. Positions Gly-267–Pro-281 are enriched in basic and acidic residues. Low complexity-rich tracts occupy residues Ala-352–Pro-375 and Ala-383–Ala-395. The segment covering Leu-399–Phe-444 has biased composition (basic and acidic residues). The tr-type G domain occupies Pro-546 to Leu-714. A G1 region spans residues Gly-555–Thr-562. Residue Gly-555–Thr-562 coordinates GTP. The interval Gly-580 to His-584 is G2. Residues Asp-601–Gly-604 form a G3 region. GTP-binding positions include Asp-601–His-605 and Asn-655–Asp-658. The tract at residues Asn-655–Asp-658 is G4. A G5 region spans residues Ser-691–Lys-693.

This sequence belongs to the TRAFAC class translation factor GTPase superfamily. Classic translation factor GTPase family. IF-2 subfamily.

It localises to the cytoplasm. One of the essential components for the initiation of protein synthesis. Protects formylmethionyl-tRNA from spontaneous hydrolysis and promotes its binding to the 30S ribosomal subunits. Also involved in the hydrolysis of GTP during the formation of the 70S ribosomal complex. The protein is Translation initiation factor IF-2 of Symbiobacterium thermophilum (strain DSM 24528 / JCM 14929 / IAM 14863 / T).